Reading from the N-terminus, the 54-residue chain is UPF0391 membrane protein Oant_1245 (54 aa).

Helical transmembrane passes span Ala5–Gly25 and Gly29–Ala48.

The protein belongs to the UPF0391 family.

It localises to the cell membrane. This is UPF0391 membrane protein Oant_1245 from Brucella anthropi (strain ATCC 49188 / DSM 6882 / CCUG 24695 / JCM 21032 / LMG 3331 / NBRC 15819 / NCTC 12168 / Alc 37) (Ochrobactrum anthropi).